The sequence spans 346 residues: N-acetyl-gamma-glutamyl-phosphate reductase (346 aa).

Cysteine 149 is an active-site residue.

The protein belongs to the NAGSA dehydrogenase family. Type 1 subfamily.

Its subcellular location is the cytoplasm. The catalysed reaction is N-acetyl-L-glutamate 5-semialdehyde + phosphate + NADP(+) = N-acetyl-L-glutamyl 5-phosphate + NADPH + H(+). It participates in amino-acid biosynthesis; L-arginine biosynthesis; N(2)-acetyl-L-ornithine from L-glutamate: step 3/4. Its function is as follows. Catalyzes the NADPH-dependent reduction of N-acetyl-5-glutamyl phosphate to yield N-acetyl-L-glutamate 5-semialdehyde. This chain is N-acetyl-gamma-glutamyl-phosphate reductase, found in Geobacter sp. (strain M21).